The primary structure comprises 326 residues: tRNA-modifying protein YgfZ (326 aa).

Folate-binding residues include Trp-27 and Trp-189.

This sequence belongs to the tRNA-modifying YgfZ family.

It is found in the cytoplasm. In terms of biological role, folate-binding protein involved in regulating the level of ATP-DnaA and in the modification of some tRNAs. It is probably a key factor in regulatory networks that act via tRNA modification, such as initiation of chromosomal replication. This chain is tRNA-modifying protein YgfZ, found in Shigella boydii serotype 4 (strain Sb227).